The following is a 203-amino-acid chain: Pyrrolidone-carboxylate peptidase (203 aa).

Active-site residues include glutamate 78, cysteine 141, and histidine 165.

This sequence belongs to the peptidase C15 family. As to quaternary structure, homotetramer.

The protein localises to the cytoplasm. It catalyses the reaction Release of an N-terminal pyroglutamyl group from a polypeptide, the second amino acid generally not being Pro.. Removes 5-oxoproline from various penultimate amino acid residues except L-proline. This chain is Pyrrolidone-carboxylate peptidase, found in Thermoanaerobacter pseudethanolicus (strain ATCC 33223 / 39E) (Clostridium thermohydrosulfuricum).